Reading from the N-terminus, the 222-residue chain is Small ribosomal subunit protein uS3 (222 aa).

In terms of domain architecture, KH type-2 spans 39-109 (IRNFVKKKVY…NILINIVEVK (71 aa)).

It belongs to the universal ribosomal protein uS3 family. Part of the 30S ribosomal subunit. Forms a tight complex with proteins S10 and S14.

Its function is as follows. Binds the lower part of the 30S subunit head. Binds mRNA in the 70S ribosome, positioning it for translation. The sequence is that of Small ribosomal subunit protein uS3 from Clostridium tetani (strain Massachusetts / E88).